Consider the following 354-residue polypeptide: Dihydroorotate dehydrogenase (quinone) (354 aa).

FMN contacts are provided by residues 70 to 74 and Thr94; that span reads AGFDK. Position 74 (Lys74) interacts with substrate. 119–123 serves as a coordination point for substrate; it reads NAMGF. Residues Asn148 and Asn181 each coordinate FMN. Residue Asn181 participates in substrate binding. The active-site Nucleophile is the Ser184. Position 186 (Asn186) interacts with substrate. Residues Lys217 and Thr245 each contribute to the FMN site. 246–247 is a binding site for substrate; it reads NT. FMN-binding positions include Gly265, Gly294, and 315–316; that span reads YS.

It belongs to the dihydroorotate dehydrogenase family. Type 2 subfamily. Monomer. Requires FMN as cofactor.

The protein localises to the cell membrane. The enzyme catalyses (S)-dihydroorotate + a quinone = orotate + a quinol. The protein operates within pyrimidine metabolism; UMP biosynthesis via de novo pathway; orotate from (S)-dihydroorotate (quinone route): step 1/1. Catalyzes the conversion of dihydroorotate to orotate with quinone as electron acceptor. The chain is Dihydroorotate dehydrogenase (quinone) from Sulfurovum sp. (strain NBC37-1).